The following is a 474-amino-acid chain: Aspartate ammonia-lyase (474 aa).

5 residues coordinate L-aspartate: Thr-105, Ser-144, Thr-145, Asn-146, and Thr-191. An SS loop region spans residues 322–331; sequence GSSIMPGKVN. The Proton acceptor role is filled by Ser-323. L-aspartate is bound by residues Ser-324 and Lys-329.

It belongs to the class-II fumarase/aspartase family. Aspartase subfamily. Homotetramer.

The enzyme catalyses L-aspartate = fumarate + NH4(+). Its function is as follows. Lyase involved in the degradation of canavanine, the delta-oxa-analog of arginine, allowing growth on canavanine as sole nitrogen and carbon source. Probably catalyzes the conversion of L-aspartate to fumarate and ammonia. In Pseudomonas canavaninivorans, this protein is Aspartate ammonia-lyase.